The chain runs to 427 residues: Trigger factor (427 aa).

The region spanning 163 to 248 (GDTVVIDFVG…VNEVKAKELP (86 aa)) is the PPIase FKBP-type domain.

The protein belongs to the FKBP-type PPIase family. Tig subfamily.

The protein localises to the cytoplasm. The catalysed reaction is [protein]-peptidylproline (omega=180) = [protein]-peptidylproline (omega=0). Involved in protein export. Acts as a chaperone by maintaining the newly synthesized protein in an open conformation. Functions as a peptidyl-prolyl cis-trans isomerase. In Lactococcus lactis subsp. cremoris (strain MG1363), this protein is Trigger factor.